Here is a 1453-residue protein sequence, read N- to C-terminus: DNA-directed RNA polymerase IV subunit 1 (1453 aa).

Residues Cys-56, Cys-59, Cys-67, His-70, Cys-97, Cys-100, and Cys-121 each coordinate Zn(2+). Residues Asp-447, Asp-449, and Asp-451 each coordinate Mg(2+). Residues 806–818 (PLESFVHSVTSRD) are bridging helix.

This sequence belongs to the RNA polymerase beta' chain family. Component of the RNA polymerase IV complex. Interacts with NRPD2, NRPD3, NRPD3B, NRPD4, NRPD5, NRPD5B, NRPD6A, NRPD7, NRPD7B, NRPD9A, NRPD9B, NRPD10, NRPD11, NRPD12, RDR2, RDM4, CLSY1, CLSY2, CLSY3, CLSY4 and SHH1. In terms of tissue distribution, mostly expressed in flowers, and, to a lower extent, in leaves.

It is found in the nucleus. It catalyses the reaction RNA(n) + a ribonucleoside 5'-triphosphate = RNA(n+1) + diphosphate. Its function is as follows. DNA-dependent RNA polymerase catalyzes the transcription of DNA into RNA using the four ribonucleoside triphosphates as substrates. Largest and catalytic component of RNA polymerase IV which mediates 24-nt short-interfering RNAs (siRNA) accumulation. Implicated in siRNA-directed heterochromatin formation through the action of DCL3 and AGO4, and subsequent DNA methylation-dependent silencing of targeted sequences. Essential component of a self-reinforcing loop coupling de novo DNA methylation to siRNA production. Required for intercellular but not intracellular RNA interference (RNAi) leading to systemic post-transcriptional gene silencing. Involved in the maintenance of post-transcriptional RNA silencing. The chain is DNA-directed RNA polymerase IV subunit 1 (NRPD1) from Arabidopsis thaliana (Mouse-ear cress).